The chain runs to 265 residues: MPVVSLAQMMESGVHFGHQTRRWNPKMSPYIYTSRNGVHIIDLVQTAHLMDEAYNYMRSQAEQGKKFLFVGTKRQAAGIIAQEAARCGSHYINQRWLGGMLTNWATIKTRVDRLKDLERREESGALDLLPKKEASMLRRELAKLQKYLGGIKTMRKVPDVVVIVDQRREYNAVQECQKLSIPIVSMLDTNCDPDVVDIPIPANDDAIRSIKLIVGKLADAIYEGRHGQLDVEEEYEDYEGSEEDYDYDETEYADSVIPEDGEEAE.

Positions 231–265 are disordered; sequence VEEEYEDYEGSEEDYDYDETEYADSVIPEDGEEAE.

The protein belongs to the universal ribosomal protein uS2 family.

In Nostoc sp. (strain PCC 7120 / SAG 25.82 / UTEX 2576), this protein is Small ribosomal subunit protein uS2.